Here is a 976-residue protein sequence, read N- to C-terminus: Vacuolar membrane protease (976 aa).

The Cytoplasmic portion of the chain corresponds to 1–15 (MKLKSVFRSVLKYRK). A helical membrane pass occupies residues 16–36 (TNLSLLLLITYSIITLLYIFD). The Vacuolar portion of the chain corresponds to 37-359 (HERYKLNLPK…KFFVISAKTL (323 aa)). N96 and N121 each carry an N-linked (GlcNAc...) asparagine glycan. Residues H156 and D168 each contribute to the Zn(2+) site. An N-linked (GlcNAc...) asparagine glycan is attached at N189. The active-site Proton acceptor is the E200. E201 contacts Zn(2+). N-linked (GlcNAc...) asparagine glycosylation is present at N217. Residues E226 and H300 each coordinate Zn(2+). A helical transmembrane segment spans residues 360-380 (FYWNCIFLLVSPVVAIGLYLI). The Cytoplasmic segment spans residues 381-392 (SRDRMTWKSYSW). Residues 393-412 (LSWTRFPLSLAAGIIVQKLF) traverse the membrane as a helical segment. Residues 413–428 (SNDIIRSNPLTFSRNY) are Vacuolar-facing. The chain crosses the membrane as a helical span at residues 429-449 (FWPISAFFTQVIFTSYVLINC). The Cytoplasmic portion of the chain corresponds to 450 to 461 (SNFFFPCADMKS). Residues 462 to 482 (LSIIELFIILWTILLFTSKLL) form a helical membrane-spanning segment. Over 483-496 (YSSDYRYTGLYPLS) the chain is Vacuolar. A helical transmembrane segment spans residues 497-517 (IFFLLSTIAAILRLLALALGM). At 518-627 (RTRKRLGREC…NSLKLEYTDY (110 aa)) the chain is on the cytoplasmic side. The interval 528–610 (RDHHSNYSSH…PLLKGSNSME (83 aa)) is disordered. A compositionally biased stretch (polar residues) spans 549–558 (NLEQPQDQLT). Residues 559–570 (SSQDDQASIQDD) show a composition bias toward low complexity. Residues 582–601 (NVDEDHGMDSSSQQHDERVP) are compositionally biased toward basic and acidic residues. Residues 628–648 (AWIIQFLLIVPIPSFILFNSV) form a helical membrane-spanning segment. The Vacuolar portion of the chain corresponds to 649 to 668 (DVIMDALNHTVQEGSKATFD). The N-linked (GlcNAc...) asparagine glycan is linked to N656. The helical transmembrane segment at 669–689 (VLRFGMVGSILIALPILPFFY) threads the bilayer. Over 690-692 (KVN) the chain is Cytoplasmic. A helical transmembrane segment spans residues 693-713 (YITISLTALLFLISASKTLLV). At 714-976 (HPFTNSNPLK…LVIVKDAIIL (263 aa)) the chain is on the vacuolar side. N768, N796, N811, N866, and N937 each carry an N-linked (GlcNAc...) asparagine glycan.

This sequence belongs to the peptidase M28 family. Requires Zn(2+) as cofactor. Post-translationally, N-glycosylated.

The protein resides in the vacuole membrane. Functionally, may be involved in vacuolar sorting and osmoregulation. This is Vacuolar membrane protease from Saccharomyces cerevisiae (strain ATCC 204508 / S288c) (Baker's yeast).